Reading from the N-terminus, the 422-residue chain is Electron transfer flavoprotein subunit alpha (422 aa).

The interval 61-80 (KRIDRSGTQQGAGGGKASAS) is disordered. FAD is bound by residues 329 to 330 (SR), 343 to 347 (QVGAT), 360 to 367 (GISGAIQH), and asparagine 381.

This sequence belongs to the ETF alpha-subunit/FixB family. Heterodimer of an alpha and a beta subunit. It depends on FAD as a cofactor.

Its function is as follows. Participates in the electron transfer process during N,N-dimethylglycine (DMG) degradation to sarcosine. The sequence is that of Electron transfer flavoprotein subunit alpha from Chromohalobacter salexigens (strain ATCC BAA-138 / DSM 3043 / CIP 106854 / NCIMB 13768 / 1H11).